The chain runs to 204 residues: MKERGLLIVLSGPSGVGKGTVRQAIFSQEDTKFEYSISVTTRSPREGEVNGVDYFFKTRDEFEQMIADNKLLEWAEYVGNYYGTPVDYVEQTLQDGKDVFLEIEVQGALQVRNAFPEGLFIFLAPPSLSELKNRIVTRGTETDALIENRMKAAKAEIEMMDAYDYVVENDNVETACDKIKAIVLAEHLKRERVAPRYKKMLEVE.

One can recognise a Guanylate kinase-like domain in the interval G5 to L184. G12–G19 is a binding site for ATP.

The protein belongs to the guanylate kinase family.

It localises to the cytoplasm. The catalysed reaction is GMP + ATP = GDP + ADP. Essential for recycling GMP and indirectly, cGMP. The protein is Guanylate kinase (gmk) of Bacillus subtilis (strain 168).